The following is a 427-amino-acid chain: Adenylosuccinate synthetase (427 aa).

GTP is bound by residues 12–18 (GDEGKGK) and 40–42 (GHT). The active-site Proton acceptor is the Asp-13. The Mg(2+) site is built by Asp-13 and Gly-40. Residues 13 to 16 (DEGK), 38 to 41 (NAGH), Thr-128, Arg-142, Gln-223, Thr-238, and Arg-302 each bind IMP. Residue His-41 is the Proton donor of the active site. 298 to 304 (TTTGRPR) is a substrate binding site. GTP contacts are provided by residues Arg-304, 330 to 332 (LLD), and 412 to 414 (SVG).

This sequence belongs to the adenylosuccinate synthetase family. In terms of assembly, homodimer. Mg(2+) is required as a cofactor.

The protein localises to the cytoplasm. The enzyme catalyses IMP + L-aspartate + GTP = N(6)-(1,2-dicarboxyethyl)-AMP + GDP + phosphate + 2 H(+). It functions in the pathway purine metabolism; AMP biosynthesis via de novo pathway; AMP from IMP: step 1/2. Its function is as follows. Plays an important role in the de novo pathway of purine nucleotide biosynthesis. Catalyzes the first committed step in the biosynthesis of AMP from IMP. The sequence is that of Adenylosuccinate synthetase from Alkaliphilus metalliredigens (strain QYMF).